Consider the following 151-residue polypeptide: Ribonuclease P protein component (151 aa).

Positions 1 to 62 (MDEKDLATQP…LKGDSAFRRL (62 aa)) are disordered. Over residues 28–48 (GAQGAEAQAAEGPLAAHAQGA) the composition is skewed to low complexity.

The protein belongs to the RnpA family. Consists of a catalytic RNA component (M1 or rnpB) and a protein subunit.

It carries out the reaction Endonucleolytic cleavage of RNA, removing 5'-extranucleotides from tRNA precursor.. RNaseP catalyzes the removal of the 5'-leader sequence from pre-tRNA to produce the mature 5'-terminus. It can also cleave other RNA substrates such as 4.5S RNA. The protein component plays an auxiliary but essential role in vivo by binding to the 5'-leader sequence and broadening the substrate specificity of the ribozyme. The protein is Ribonuclease P protein component of Thermus oshimai.